The sequence spans 286 residues: Probable alpha-ketoglutarate-dependent hypophosphite dioxygenase (286 aa).

It belongs to the PhyH family.

In terms of biological role, required for hypophosphite oxidation. The polypeptide is Probable alpha-ketoglutarate-dependent hypophosphite dioxygenase (htxA) (Stutzerimonas stutzeri (Pseudomonas stutzeri)).